The primary structure comprises 406 residues: Tryptophan synthase beta chain (406 aa).

Lys99 carries the N6-(pyridoxal phosphate)lysine modification.

The protein belongs to the TrpB family. In terms of assembly, tetramer of two alpha and two beta chains. Requires pyridoxal 5'-phosphate as cofactor.

It carries out the reaction (1S,2R)-1-C-(indol-3-yl)glycerol 3-phosphate + L-serine = D-glyceraldehyde 3-phosphate + L-tryptophan + H2O. It participates in amino-acid biosynthesis; L-tryptophan biosynthesis; L-tryptophan from chorismate: step 5/5. The beta subunit is responsible for the synthesis of L-tryptophan from indole and L-serine. The polypeptide is Tryptophan synthase beta chain (Brucella anthropi (strain ATCC 49188 / DSM 6882 / CCUG 24695 / JCM 21032 / LMG 3331 / NBRC 15819 / NCTC 12168 / Alc 37) (Ochrobactrum anthropi)).